Here is a 1108-residue protein sequence, read N- to C-terminus: DNA-directed RNA polymerase subunit beta (1108 aa).

A disordered region spans residues 1081–1108 (SPRRTPARPTIDYSALDDTDDKEGATTF).

This sequence belongs to the RNA polymerase beta chain family. In cyanobacteria the RNAP catalytic core is composed of 2 alpha, 1 beta, 1 beta', 1 gamma and 1 omega subunit. When a sigma factor is associated with the core the holoenzyme is formed, which can initiate transcription.

The enzyme catalyses RNA(n) + a ribonucleoside 5'-triphosphate = RNA(n+1) + diphosphate. In terms of biological role, DNA-dependent RNA polymerase catalyzes the transcription of DNA into RNA using the four ribonucleoside triphosphates as substrates. In Thermosynechococcus vestitus (strain NIES-2133 / IAM M-273 / BP-1), this protein is DNA-directed RNA polymerase subunit beta.